A 250-amino-acid polypeptide reads, in one-letter code: N-acyl homoserine lactonase (250 aa).

Zn(2+)-binding residues include H104, H106, D108, H109, H169, D191, and H235.

Belongs to the metallo-beta-lactamase superfamily. In terms of assembly, monomer. Zn(2+) is required as a cofactor.

It catalyses the reaction an N-acyl-L-homoserine lactone + H2O = an N-acyl-L-homoserine + H(+). Catalyzes hydrolysis of N-hexanoyl-(S)-homoserine lactone, but not the R-enantiomer. Hydrolyzes short- and long-chain N-acyl homoserine lactones with or without 3-oxo substitution at C3, has maximum activity on C10-AHL. This chain is N-acyl homoserine lactonase, found in Bacillus thuringiensis subsp. indiana.